Here is a 447-residue protein sequence, read N- to C-terminus: Trigger factor (447 aa).

Positions 164-249 constitute a PPIase FKBP-type domain; sequence GDLVVIDFIG…VKEVKQAVVP (86 aa).

This sequence belongs to the FKBP-type PPIase family. Tig subfamily.

It localises to the cytoplasm. It catalyses the reaction [protein]-peptidylproline (omega=180) = [protein]-peptidylproline (omega=0). Functionally, involved in protein export. Acts as a chaperone by maintaining the newly synthesized protein in an open conformation. Functions as a peptidyl-prolyl cis-trans isomerase. This is Trigger factor from Rhodospirillum rubrum (strain ATCC 11170 / ATH 1.1.1 / DSM 467 / LMG 4362 / NCIMB 8255 / S1).